A 142-amino-acid chain; its full sequence is Large ribosomal subunit protein uL11 (142 aa).

It belongs to the universal ribosomal protein uL11 family. Part of the ribosomal stalk of the 50S ribosomal subunit. Interacts with L10 and the large rRNA to form the base of the stalk. L10 forms an elongated spine to which L12 dimers bind in a sequential fashion forming a multimeric L10(L12)X complex. One or more lysine residues are methylated.

In terms of biological role, forms part of the ribosomal stalk which helps the ribosome interact with GTP-bound translation factors. In Pelotomaculum thermopropionicum (strain DSM 13744 / JCM 10971 / SI), this protein is Large ribosomal subunit protein uL11.